Reading from the N-terminus, the 428-residue chain is L-rhamnonate dehydratase (428 aa).

The substrate site is built by H56 and R82. D249, E275, and E303 together coordinate Mg(2+). The active-site Proton acceptor is H352. Position 372 (E372) interacts with substrate.

Belongs to the mandelate racemase/muconate lactonizing enzyme family. RhamD subfamily. Homooctamer; tetramer of dimers. Mg(2+) is required as a cofactor.

It carries out the reaction L-rhamnonate = 2-dehydro-3-deoxy-L-rhamnonate + H2O. Catalyzes the dehydration of L-rhamnonate to 2-keto-3-deoxy-L-rhamnonate (KDR). In Shigella sonnei (strain Ss046), this protein is L-rhamnonate dehydratase.